A 130-amino-acid polypeptide reads, in one-letter code: 3-aminoacrylate deaminase RutC (130 aa).

Belongs to the RutC family.

It catalyses the reaction (Z)-3-aminoacrylate + H2O + H(+) = 3-oxopropanoate + NH4(+). Involved in pyrimidine catabolism. Catalyzes the deamination of 3-aminoacrylate to malonic semialdehyde, a reaction that can also occur spontaneously. RutC may facilitate the reaction and modulate the metabolic fitness, rather than catalyzing essential functions. In Methylorubrum extorquens (strain CM4 / NCIMB 13688) (Methylobacterium extorquens), this protein is 3-aminoacrylate deaminase RutC.